A 498-amino-acid polypeptide reads, in one-letter code: MKKVTVGAAVVGAAAVCAVAALIVNHRMRKSSKWGRAMAILREFEEKCKTQDAKLKQVADAMTVEMHAGLASEGGQSSRCLSPMSIISQLVMKLGVFYALDLGGTNFRVLRVQLGGKDGGIIHQEFAEASIPPSLMVGTSDALFDYIAAELAKFVAAEEEKFHQPPGKQRELGFHLLIPSNADFNNSGTIMRWTKGFSIDDAVGQDVVGELTKAMKEKVLDMRVSALVNDTVGTLAGGKYTQKDVAVAVILGTGTNAAYVERVQAIPKWHGPVPKSGEMVINMEWGNFRSSHLPLTEYDHALDNESLNPAEQIFEKMTSGMYLGEILRRVLTRVAEEVLAFLAMRSLQSLKDSFVLRTPDMSAMHHDTSPDLKVVGEKLKDILEISNTSLKTRKLVLSLCNIVATRGARLDAAGVLGILKKMGRDTPKQGGSERTVIAMDGGLYEHYTEYRMCLENSLKDLLGEELATSIVFVHSNDGSGIGAALLRASHSMYLEDQA.

The chain crosses the membrane as a helical span at residues 4–24; that stretch reads VTVGAAVVGAAAVCAVAALIV. Residues 35-488 enclose the Hexokinase domain; it reads GRAMAILREF…SGIGAALLRA (454 aa). A hexokinase small subdomain region spans residues 89–228; sequence QLVMKLGVFY…VLDMRVSALV (140 aa). Residues Gly-104, Thr-105, and Asn-106 each coordinate ADP. D-glucose contacts are provided by Thr-194, Lys-195, Asn-229, and Asp-230. The tract at residues 229-477 is hexokinase large subdomain; the sequence is NDTVGTLAGG…TSIVFVHSND (249 aa). Thr-253 is a binding site for ADP. 3 residues coordinate D-glucose: Asn-256, Glu-284, and Glu-315. Gly-442 is an ADP binding site.

Belongs to the hexokinase family. As to expression, expressed in young and mature leaves, stems, roots, stolons, and developing and mature tubers.

The protein resides in the plastid. Its subcellular location is the chloroplast outer membrane. It catalyses the reaction a D-hexose + ATP = a D-hexose 6-phosphate + ADP + H(+). It carries out the reaction D-fructose + ATP = D-fructose 6-phosphate + ADP + H(+). The enzyme catalyses D-glucose + ATP = D-glucose 6-phosphate + ADP + H(+). The protein operates within carbohydrate metabolism; hexose metabolism. Its pathway is carbohydrate degradation; glycolysis; D-glyceraldehyde 3-phosphate and glycerone phosphate from D-glucose: step 1/4. Its function is as follows. Fructose and glucose phosphorylating enzyme. May be involved in the phosphorylation of glucose during the export from plastids to cytosol. Seems neither to be involved in cell sugar sensing nor in carbohydrate metabolism in tuber. The polypeptide is Hexokinase-1 (HXK1) (Solanum tuberosum (Potato)).